The following is a 57-amino-acid chain: Large ribosomal subunit protein bL32 (57 aa).

Positions 1–21 are disordered; it reads MAVPKRRTSKKVKNQRRTHKK.

This sequence belongs to the bacterial ribosomal protein bL32 family.

This is Large ribosomal subunit protein bL32 from Oceanobacillus iheyensis (strain DSM 14371 / CIP 107618 / JCM 11309 / KCTC 3954 / HTE831).